We begin with the raw amino-acid sequence, 334 residues long: Ribosomal RNA small subunit methyltransferase H (334 aa).

S-adenosyl-L-methionine-binding positions include 53-55 (GGH), Asp72, Phe99, Asp122, and His129.

The protein belongs to the methyltransferase superfamily. RsmH family.

The protein resides in the cytoplasm. The catalysed reaction is cytidine(1402) in 16S rRNA + S-adenosyl-L-methionine = N(4)-methylcytidine(1402) in 16S rRNA + S-adenosyl-L-homocysteine + H(+). In terms of biological role, specifically methylates the N4 position of cytidine in position 1402 (C1402) of 16S rRNA. The polypeptide is Ribosomal RNA small subunit methyltransferase H (Leptospira interrogans serogroup Icterohaemorrhagiae serovar copenhageni (strain Fiocruz L1-130)).